A 325-amino-acid chain; its full sequence is Alkanal monooxygenase beta chain (325 aa).

This sequence belongs to the bacterial luciferase oxidoreductase family. As to quaternary structure, heterodimer of an alpha and a beta chain.

It carries out the reaction a long-chain fatty aldehyde + FMNH2 + O2 = a long-chain fatty acid + hnu + FMN + H2O + 2 H(+). In terms of biological role, light-emitting reaction in luminous bacteria. The specific role of the beta subunit is unknown, but it is absolutely required for bioluminescence activity. This Photobacterium leiognathi protein is Alkanal monooxygenase beta chain (luxB).